A 457-amino-acid polypeptide reads, in one-letter code: Cell division cycle 20.1, cofactor of APC complex (457 aa).

WD repeat units lie at residues 138-175 (VDDFYLNLLDWGSANVLAIALDHTVYLWDASTGSTSEL), 180-219 (EEKGPVTSINWAPDGRHVAVGLNNSEVQLWDSASNRQLRT), 223-260 (GHQSRVGSLAWNNHILTTGGMDGLIINNDVRIRSPIVE), 264-303 (GHTQEVCGLKWSGSGQQLASGGNDNVVHIWDRSVASSNST), 312-354 (EHTS…CLNS), 356-397 (DTGS…KMAE), and 400-439 (GHTSRVLYMAQSPDGCTVASAAGDETLRFWNVFGVPETAK).

It belongs to the WD repeat CDC20/Fizzy family. The APC/C is composed of at least 11 subunits that stay tightly associated throughout the cell cycle. Interacts with APC10, FZR1, FZR2, FZR3. Binds to GIG1 and PYM. Part of the mitotic checkpoint complex (MCC); interacts with MAD2, BUB3.1, BUBR1 and BUB1. Binds to cyclins CYCA1-2, CYCB2-1 and CYCB2-2. Interacts with PANS1. As to expression, expressed in meristems and organ primordia. Present in flowers, leaves, stems, roots, pollen grains and developing seeds.

The protein resides in the nucleus. It functions in the pathway protein modification; protein ubiquitination. In terms of biological role, component of the anaphase promoting complex/cyclosome (APC/C), a cell cycle-regulated E3 ubiquitin-protein ligase complex that controls progression through mitosis and the G1 phase of the cell cycle. The sequence is that of Cell division cycle 20.1, cofactor of APC complex (CDC20-1) from Arabidopsis thaliana (Mouse-ear cress).